Here is a 232-residue protein sequence, read N- to C-terminus: Cell surface superoxide dismutase [Cu-Zn] 4 (232 aa).

The N-terminal stretch at methionine 1 to alanine 15 is a signal peptide. A glycan (N-linked (GlcNAc...) asparagine) is linked at asparagine 53. Cu cation-binding residues include histidine 75 and histidine 77. Asparagine 86 carries an N-linked (GlcNAc...) asparagine glycan. Histidine 93 provides a ligand contact to Cu cation. Position 93 (histidine 93) interacts with Zn(2+). The N-linked (GlcNAc...) asparagine glycan is linked to asparagine 98. Aspartate 113 contacts Zn(2+). Residue asparagine 120 is glycosylated (N-linked (GlcNAc...) asparagine). Histidine 153 contributes to the Cu cation binding site. Asparagine 156, asparagine 164, asparagine 182, asparagine 193, and asparagine 196 each carry an N-linked (GlcNAc...) asparagine glycan. Residues threonine 174–glycine 208 are compositionally biased toward low complexity. The segment at threonine 174–alanine 211 is disordered. Serine 209 carries GPI-anchor amidated serine lipidation. Positions glycine 210–isoleucine 232 are cleaved as a propeptide — removed in mature form. A substrate-binding site is contributed by arginine 213.

It belongs to the Cu-Zn superoxide dismutase family. Cu cation serves as cofactor. It depends on Zn(2+) as a cofactor. In terms of processing, the GPI-anchor is attached to the protein in the endoplasmic reticulum and serves to target the protein to the cell surface. There, the glucosamine-inositol phospholipid moiety is cleaved off and the GPI-modified mannoprotein is covalently attached via its lipidless GPI glycan remnant to the 1,6-beta-glucan of the outer cell wall layer.

The protein localises to the secreted. The protein resides in the cell wall. It localises to the membrane. The catalysed reaction is 2 superoxide + 2 H(+) = H2O2 + O2. Superoxide dismutases serve to convert damaging superoxide radicals, a key form of ROS, to less damaging hydrogen peroxide that can be converted into water by catalase action. Degrades host-derived reactive oxygen species to escape innate immune surveillance. Involved in the occurrence of miconazole-tolerant persisters in biofilms. Persisters are cells that survive high doses of an antimicrobial agent. The chain is Cell surface superoxide dismutase [Cu-Zn] 4 (SOD4) from Candida albicans (strain SC5314 / ATCC MYA-2876) (Yeast).